A 67-amino-acid polypeptide reads, in one-letter code: Large ribosomal subunit protein bL31 (67 aa).

The protein belongs to the bacterial ribosomal protein bL31 family. Type A subfamily. Part of the 50S ribosomal subunit.

Functionally, binds the 23S rRNA. The sequence is that of Large ribosomal subunit protein bL31 from Wolinella succinogenes (strain ATCC 29543 / DSM 1740 / CCUG 13145 / JCM 31913 / LMG 7466 / NCTC 11488 / FDC 602W) (Vibrio succinogenes).